The primary structure comprises 255 residues: 14-3-3 protein 5 (255 aa).

The protein belongs to the 14-3-3 family. As to quaternary structure, homodimer.

The protein is 14-3-3 protein 5 (TFT5) of Solanum lycopersicum (Tomato).